The primary structure comprises 79 residues: Probable [Fe-S]-dependent transcriptional repressor (79 aa).

Residues cysteine 56, cysteine 61, cysteine 64, and cysteine 71 each contribute to the iron-sulfur cluster site.

This sequence belongs to the FeoC family.

Its function is as follows. May function as a transcriptional regulator that controls feoABC expression. The chain is Probable [Fe-S]-dependent transcriptional repressor from Klebsiella pneumoniae subsp. pneumoniae (strain ATCC 700721 / MGH 78578).